Reading from the N-terminus, the 431-residue chain is Adenylosuccinate synthetase (431 aa).

Residues 12–18 and 40–42 each bind GTP; these read GDEGKGK and GHT. Asp13 functions as the Proton acceptor in the catalytic mechanism. Residues Asp13 and Gly40 each coordinate Mg(2+). IMP is bound by residues 13–16, 38–41, Thr131, Arg145, Gln225, Thr240, and Arg304; these read DEGK and NAGH. His41 (proton donor) is an active-site residue. 300–306 contributes to the substrate binding site; sequence TVTGRKR. GTP-binding positions include Arg306, 332-334, and 414-416; these read KLD and STS.

This sequence belongs to the adenylosuccinate synthetase family. As to quaternary structure, homodimer. Requires Mg(2+) as cofactor.

The protein resides in the cytoplasm. The catalysed reaction is IMP + L-aspartate + GTP = N(6)-(1,2-dicarboxyethyl)-AMP + GDP + phosphate + 2 H(+). It participates in purine metabolism; AMP biosynthesis via de novo pathway; AMP from IMP: step 1/2. Plays an important role in the de novo pathway of purine nucleotide biosynthesis. Catalyzes the first committed step in the biosynthesis of AMP from IMP. The protein is Adenylosuccinate synthetase of Roseobacter denitrificans (strain ATCC 33942 / OCh 114) (Erythrobacter sp. (strain OCh 114)).